Consider the following 410-residue polypeptide: Exopolygalacturonase (410 aa).

An N-terminal signal peptide occupies residues Met-1–Gly-22. N-linked (GlcNAc...) asparagine glycosylation is found at Asn-89 and Asn-201. PbH1 repeat units follow at residues Cys-192–Asp-218, Ser-219–Pro-240, Thr-242–Ser-262, Val-272–Ala-293, and Ala-337–Asp-377. The active-site Proton donor is Asp-233. Cys-235 and Cys-252 form a disulfide bridge. Asn-246 is a glycosylation site (N-linked (GlcNAc...) asparagine). The active site involves His-256. Asn-349 carries N-linked (GlcNAc...) asparagine glycosylation. Cys-364 and Cys-370 are disulfide-bonded. N-linked (GlcNAc...) asparagine glycosylation is present at Asn-387. A disulfide bridge connects residues Cys-393 and Cys-409.

The protein belongs to the glycosyl hydrolase 28 family. Pollen.

The protein localises to the secreted. The protein resides in the cell wall. The catalysed reaction is [(1-&gt;4)-alpha-D-galacturonosyl](n) + H2O = alpha-D-galacturonate + [(1-&gt;4)-alpha-D-galacturonosyl](n-1). May function in depolymerizing pectin during pollen development, germination, and tube growth. Acts as an exo-polygalacturonase. This Zea mays (Maize) protein is Exopolygalacturonase (PG2C).